The chain runs to 320 residues: Probable cell division protein WhiA (320 aa).

Residues 276-310 (TLKELGEMVAGGKISKSGINHRLRKIDEIAERLRA) constitute a DNA-binding region (H-T-H motif).

This sequence belongs to the WhiA family.

Functionally, involved in cell division and chromosome segregation. The sequence is that of Probable cell division protein WhiA from Geobacillus thermodenitrificans (strain NG80-2).